The following is a 916-amino-acid chain: Protein translocase subunit SecA (916 aa).

Residues Gln87, Gly105–Thr109, and Asp507 contribute to the ATP site. Zn(2+)-binding residues include Cys900, Cys902, Cys911, and His912.

It belongs to the SecA family. In terms of assembly, monomer and homodimer. Part of the essential Sec protein translocation apparatus which comprises SecA, SecYEG and auxiliary proteins SecDF-YajC and YidC. It depends on Zn(2+) as a cofactor.

The protein localises to the cell inner membrane. It is found in the cytoplasm. It carries out the reaction ATP + H2O + cellular proteinSide 1 = ADP + phosphate + cellular proteinSide 2.. In terms of biological role, part of the Sec protein translocase complex. Interacts with the SecYEG preprotein conducting channel. Has a central role in coupling the hydrolysis of ATP to the transfer of proteins into and across the cell membrane, serving both as a receptor for the preprotein-SecB complex and as an ATP-driven molecular motor driving the stepwise translocation of polypeptide chains across the membrane. The polypeptide is Protein translocase subunit SecA (Neisseria gonorrhoeae (strain ATCC 700825 / FA 1090)).